A 623-amino-acid polypeptide reads, in one-letter code: Trehalase (623 aa).

Belongs to the glycosyl hydrolase 15 family. Monomer.

The catalysed reaction is alpha,alpha-trehalose + H2O = alpha-D-glucose + beta-D-glucose. It participates in glycan degradation; trehalose degradation; D-glucose from alpha,alpha-trehalose: step 1/1. With respect to regulation, inhibited by validamycin A. Catalyzes the hydrolysis of alpha,alpha-trehalose into two molecules of D-glucose. This Thermoplasma volcanium (strain ATCC 51530 / DSM 4299 / JCM 9571 / NBRC 15438 / GSS1) protein is Trehalase.